Consider the following 278-residue polypeptide: Indole-3-glycerol phosphate synthase (278 aa).

This sequence belongs to the TrpC family.

It catalyses the reaction 1-(2-carboxyphenylamino)-1-deoxy-D-ribulose 5-phosphate + H(+) = (1S,2R)-1-C-(indol-3-yl)glycerol 3-phosphate + CO2 + H2O. The protein operates within amino-acid biosynthesis; L-tryptophan biosynthesis; L-tryptophan from chorismate: step 4/5. This Pseudomonas aeruginosa (strain LESB58) protein is Indole-3-glycerol phosphate synthase.